The chain runs to 317 residues: Large ribosomal subunit protein uL10 (317 aa).

The span at 280 to 290 (SASAAPAAGGA) shows a compositional bias: low complexity. Positions 280–317 (SASAAPAAGGATEKKEEAKKPESESEEEDDDMGFGLFD) are disordered. Positions 291–302 (TEKKEEAKKPES) are enriched in basic and acidic residues. Residue S302 is modified to Phosphoserine. At S304 the chain carries Phosphoserine; by CK1.

Belongs to the universal ribosomal protein uL10 family. As to quaternary structure, P0 forms a pentameric complex by interaction with dimers of P1 and P2.

The protein resides in the cytoplasm. Its subcellular location is the nucleus. In terms of biological role, ribosomal protein P0 is the functional equivalent of E.coli protein L10. This is Large ribosomal subunit protein uL10 (RpLP0) from Drosophila melanogaster (Fruit fly).